The primary structure comprises 615 residues: Medium-chain acyl-CoA ligase ACSF2, mitochondrial (615 aa).

Residues 1-41 (MAVYHGMLRFGRLCIASLGARGPRTLLSRPRPNSKLQSVRA) constitute a mitochondrion transit peptide. Lys-179 bears the N6-acetyllysine mark. At Lys-182 the chain carries N6-acetyllysine; alternate. Position 182 is an N6-succinyllysine; alternate (Lys-182). Residue Lys-199 is modified to N6-acetyllysine. 263–271 (TSGTTGNPK) lines the ATP pocket. N6-acetyllysine is present on residues Lys-340 and Lys-398. The residue at position 478 (Lys-478) is an N6-succinyllysine. Asp-493 and Arg-508 together coordinate ATP. Lys-510 is modified (N6-acetyllysine). An N6-acetyllysine; alternate mark is found at Lys-544 and Lys-570. Residues Lys-544 and Lys-570 each carry the N6-succinyllysine; alternate modification. ATP is bound at residue Lys-599. Lys-599 carries the post-translational modification N6-succinyllysine.

It belongs to the ATP-dependent AMP-binding enzyme family.

The protein resides in the mitochondrion. It carries out the reaction a medium-chain fatty acid + ATP + CoA = a medium-chain fatty acyl-CoA + AMP + diphosphate. It catalyses the reaction octanoate + ATP + CoA = octanoyl-CoA + AMP + diphosphate. Its function is as follows. Acyl-CoA synthases catalyze the initial reaction in fatty acid metabolism, by forming a thioester with CoA. Has some preference toward medium-chain substrates. Plays a role in adipocyte differentiation. The sequence is that of Medium-chain acyl-CoA ligase ACSF2, mitochondrial from Mus musculus (Mouse).